Reading from the N-terminus, the 74-residue chain is Brevinin-2Ef (74 aa).

The N-terminal stretch at 1-22 (MFTMKKSLLLIFFLGTISLSLC) is a signal peptide. Positions 23 to 41 (QEERNADDDDGEMTEEEKR) are excised as a propeptide. C68 and C74 are oxidised to a cystine.

It belongs to the frog skin active peptide (FSAP) family. Brevinin subfamily. In terms of tissue distribution, expressed by the skin glands.

The protein localises to the secreted. Its function is as follows. Shows antibacterial activity against representative Gram-negative and Gram-positive bacterial species, and hemolytic activity. In Pelophylax lessonae (Pool frog), this protein is Brevinin-2Ef.